The chain runs to 688 residues: DNA ligase (688 aa).

Residues 38–42 (DEEYD), 87–88 (SL), and E118 contribute to the NAD(+) site. K120 (N6-AMP-lysine intermediate) is an active-site residue. NAD(+) is bound by residues R141, E175, K291, and K315. Zn(2+) is bound by residues C409, C412, C428, and C433. A BRCT domain is found at 590-679 (VKLDILRGLT…AELKGYNFDE (90 aa)).

Belongs to the NAD-dependent DNA ligase family. LigA subfamily. It depends on Mg(2+) as a cofactor. Mn(2+) is required as a cofactor.

The catalysed reaction is NAD(+) + (deoxyribonucleotide)n-3'-hydroxyl + 5'-phospho-(deoxyribonucleotide)m = (deoxyribonucleotide)n+m + AMP + beta-nicotinamide D-nucleotide.. Its function is as follows. DNA ligase that catalyzes the formation of phosphodiester linkages between 5'-phosphoryl and 3'-hydroxyl groups in double-stranded DNA using NAD as a coenzyme and as the energy source for the reaction. It is essential for DNA replication and repair of damaged DNA. This is DNA ligase from Thermotoga maritima (strain ATCC 43589 / DSM 3109 / JCM 10099 / NBRC 100826 / MSB8).